A 210-amino-acid polypeptide reads, in one-letter code: Eukaryotic translation initiation factor 2 subunit gamma (210 aa).

Positions 1–196 constitute a tr-type G domain; the sequence is IGHVAHGKST…HLVETITPPR (196 aa). Positions 2 to 9 are G1; it reads GHVAHGKS. A GTP-binding site is contributed by 5 to 10; it reads AHGKST. The interval 30-34 is G2; the sequence is NITIK. The tract at residues 85–88 is G3; the sequence is DCPG. Residues 141 to 144 and 174 to 176 each bind GTP; these read NKID and SAI. The tract at residues 141 to 144 is G4; the sequence is NKID. The segment at 174–176 is G5; it reads SAI.

It belongs to the TRAFAC class translation factor GTPase superfamily. Classic translation factor GTPase family. EIF2G subfamily. As to quaternary structure, eukaryotic translation initiation factor 2 eIF2 is a heterotrimeric complex composed of an alpha, a beta and a gamma subunit. The factors eIF-1, eIF-2, eIF-3, TIF5/eIF-5 and methionyl-tRNAi form a multifactor complex (MFC) that may bind to the 40S ribosome.

The protein localises to the cytoplasm. Its subcellular location is the cytosol. The enzyme catalyses GTP + H2O = GDP + phosphate + H(+). As a subunit of eukaryotic initiation factor 2 eIF2, involved in the early steps of protein synthesis. In the presence of GTP, eIF-2 forms a ternary complex with initiator tRNA Met-tRNAi and then recruits the 40S ribosomal complex and initiation factors eIF-1, eIF-1A and eIF-3 to form the 43S pre-initiation complex (43S PIC), a step that determines the rate of protein translation. The 43S PIC binds to mRNA and scans downstream to the initiation codon, where it forms a 48S initiation complex by codon-anticodon base pairing. This leads to the displacement of eIF-1 to allow GTPase-activating protein (GAP) eIF-5-mediated hydrolysis of eIF2-bound GTP. Hydrolysis of GTP and release of Pi, which makes GTP hydrolysis irreversible, causes the release of the eIF-2-GDP binary complex from the 40S subunit, an event that is essential for the subsequent joining of the 60S ribosomal subunit to form an elongation-competent 80S ribosome. In order for eIF-2 to recycle and catalyze another round of initiation, the GDP bound to eIF-2 must be exchanged with GTP by way of a reaction catalyzed by GDP-GTP exchange factor (GEF) eIF-2B. This Spironucleus vortens protein is Eukaryotic translation initiation factor 2 subunit gamma.